The following is a 204-amino-acid chain: Thymidylate kinase (204 aa).

11-18 (GLDKSGKT) serves as a coordination point for ATP.

It belongs to the thymidylate kinase family.

The catalysed reaction is dTMP + ATP = dTDP + ADP. The protein operates within pyrimidine metabolism; dTTP biosynthesis. This Vaccinia virus (strain Ankara) (VACV) protein is Thymidylate kinase (TMK).